The sequence spans 1496 residues: Chromosome partition protein MukB (1496 aa).

63-70 is an ATP binding site; that stretch reads GGNGAGKS. Coiled-coil stretches lie at residues 328–493 and 536–632; these read KLEL…QRLS and KMQA…APAW. The segment at 694 to 811 is flexible hinge; sequence PDGSDDVRLN…EVPLFGRAAR (118 aa). Coiled coils occupy residues 861-1171 and 1235-1291; these read NPEE…SAEE and IDAI…LQNI. Over residues 1082 to 1091 the composition is skewed to basic and acidic residues; sequence RARSRRDELQ. The segment at 1082–1101 is disordered; sequence RARSRRDELQQRLSQQRSRK.

The protein belongs to the SMC family. MukB subfamily. In terms of assembly, homodimerization via its hinge domain. Binds to DNA via its C-terminal region. Interacts, and probably forms a ternary complex, with MukE and MukF via its C-terminal region. The complex formation is stimulated by calcium or magnesium. Interacts with tubulin-related protein FtsZ.

The protein resides in the cytoplasm. It localises to the nucleoid. Its function is as follows. Plays a central role in chromosome condensation, segregation and cell cycle progression. Functions as a homodimer, which is essential for chromosome partition. Involved in negative DNA supercoiling in vivo, and by this means organize and compact chromosomes. May achieve or facilitate chromosome segregation by condensation DNA from both sides of a centrally located replisome during cell division. The sequence is that of Chromosome partition protein MukB from Actinobacillus pleuropneumoniae serotype 7 (strain AP76).